The chain runs to 239 residues: Pyridoxal 5'-phosphate synthase subunit PdxS (239 aa).

Asp-21 lines the D-ribose 5-phosphate pocket. Lys-78 serves as the catalytic Schiff-base intermediate with D-ribose 5-phosphate. Gly-150 contacts D-ribose 5-phosphate. Residue Arg-162 coordinates D-glyceraldehyde 3-phosphate. D-ribose 5-phosphate-binding positions include Gly-211 and 232-233 (GS).

The protein belongs to the PdxS/SNZ family. As to quaternary structure, in the presence of PdxT, forms a dodecamer of heterodimers.

It catalyses the reaction aldehydo-D-ribose 5-phosphate + D-glyceraldehyde 3-phosphate + L-glutamine = pyridoxal 5'-phosphate + L-glutamate + phosphate + 3 H2O + H(+). It participates in cofactor biosynthesis; pyridoxal 5'-phosphate biosynthesis. Its function is as follows. Catalyzes the formation of pyridoxal 5'-phosphate from ribose 5-phosphate (RBP), glyceraldehyde 3-phosphate (G3P) and ammonia. The ammonia is provided by the PdxT subunit. Can also use ribulose 5-phosphate and dihydroxyacetone phosphate as substrates, resulting from enzyme-catalyzed isomerization of RBP and G3P, respectively. This chain is Pyridoxal 5'-phosphate synthase subunit PdxS, found in Francisella tularensis.